We begin with the raw amino-acid sequence, 326 residues long: MEMO1 family protein TTHA0924 (326 aa).

It belongs to the MEMO1 family.

This is MEMO1 family protein TTHA0924 from Thermus thermophilus (strain ATCC 27634 / DSM 579 / HB8).